Here is a 362-residue protein sequence, read N- to C-terminus: UDP-arabinopyranose mutase 3 (362 aa).

A DXD motif motif is present at residues aspartate 106–aspartate 108. N-linked (Glc...) arginine glycosylation occurs at arginine 154.

This sequence belongs to the RGP family. As to quaternary structure, heterodimer with RGP1. Requires Mn(2+) as cofactor. Mg(2+) serves as cofactor. Reversibly glycosylated in vitro by UDP-glucose, UDP-xylose and UDP-galactose, but not UDP-mannose. As to expression, specifically expressed in developing seeds.

It is found in the cytoplasm. The protein localises to the cytosol. The protein resides in the golgi apparatus. It catalyses the reaction UDP-beta-L-arabinofuranose = UDP-beta-L-arabinopyranose. Its function is as follows. UDP-L-arabinose mutase involved in the biosynthesis of cell wall non-cellulosic polysaccharides. Catalyzes the interconvertion of UDP-L-arabinopyranose (UDP-Arap) and UDP-L-arabinofuranose (UDP-Araf). Preferentially catalyzes the formation of UDP-Arap from UDP-Araf. At thermodynamic equilibrium in vitro the ratio of the pyranose form over the furanose form is 95:5. Is not active on other UDP-sugars (UDP-Gal, UDP-Xyl, UDP-Glc, GDP-Man and GDP-Fuc). Is probably active as heteromer in vivo. The protein is UDP-arabinopyranose mutase 3 of Arabidopsis thaliana (Mouse-ear cress).